Consider the following 110-residue polypeptide: Nucleoid-associated protein PERMA_0533 (110 aa).

Belongs to the YbaB/EbfC family. In terms of assembly, homodimer.

It localises to the cytoplasm. It is found in the nucleoid. In terms of biological role, binds to DNA and alters its conformation. May be involved in regulation of gene expression, nucleoid organization and DNA protection. This Persephonella marina (strain DSM 14350 / EX-H1) protein is Nucleoid-associated protein PERMA_0533.